The chain runs to 135 residues: Ribosome-binding factor A (135 aa).

Positions Val-115–Glu-135 are disordered. Residues Asn-116–Glu-135 show a composition bias toward basic and acidic residues.

It belongs to the RbfA family. In terms of assembly, monomer. Binds 30S ribosomal subunits, but not 50S ribosomal subunits or 70S ribosomes.

Its subcellular location is the cytoplasm. Its function is as follows. One of several proteins that assist in the late maturation steps of the functional core of the 30S ribosomal subunit. Associates with free 30S ribosomal subunits (but not with 30S subunits that are part of 70S ribosomes or polysomes). Required for efficient processing of 16S rRNA. May interact with the 5'-terminal helix region of 16S rRNA. This chain is Ribosome-binding factor A, found in Vibrio campbellii (strain ATCC BAA-1116).